The sequence spans 263 residues: Triosephosphate isomerase (263 aa).

10 to 12 (NWK) lines the substrate pocket. The Electrophile role is filled by histidine 104. Glutamate 176 acts as the Proton acceptor in catalysis. Substrate contacts are provided by residues glycine 182, serine 221, and 242–243 (GG).

Belongs to the triosephosphate isomerase family. In terms of assembly, homodimer.

The protein resides in the cytoplasm. The enzyme catalyses D-glyceraldehyde 3-phosphate = dihydroxyacetone phosphate. The protein operates within carbohydrate biosynthesis; gluconeogenesis. Its pathway is carbohydrate degradation; glycolysis; D-glyceraldehyde 3-phosphate from glycerone phosphate: step 1/1. Functionally, involved in the gluconeogenesis. Catalyzes stereospecifically the conversion of dihydroxyacetone phosphate (DHAP) to D-glyceraldehyde-3-phosphate (G3P). The sequence is that of Triosephosphate isomerase from Haemophilus influenzae (strain PittEE).